We begin with the raw amino-acid sequence, 300 residues long: MAEITLEPSDLMAQTNKRIVPKFTEIFPVEDANYPYSAFIASVRKDVIKHCTDHKGIFQPVLPPEKKVPELWLYTELKTRTSSITLAIRMDNLYLVGFRTPGGVWWEFGKDGDTHLLGDNPRWLGFGGRYQDLIGNKGLETVTMGRAEMTRAVNDLAKKKKMATLEEEEVQMQMQMPEAADLAAAAAADPQADTKSKLVKLVVMVCEGLRFNTVSRTVDAGFNSQHGVTLTVTQGKQVQKWDRISKAAFEWADHPTAVIPDMQKLGIKDKNEAARIVALVKNQTTACATAASADNDDDEA.

Residue glutamate 207 is part of the active site.

The protein belongs to the ribosome-inactivating protein family. Type 1 RIP subfamily. As to quaternary structure, monomer. In terms of tissue distribution, accumulates to high levels in seeds.

Its subcellular location is the cytoplasm. The enzyme catalyses Endohydrolysis of the N-glycosidic bond at one specific adenosine on the 28S rRNA.. In terms of biological role, possesses features of some constitutive defense agent. The coordinate Opaque-2-controlled synthesis of this protein and the major seed storage proteins (zeins) may provide the germinating seedling with both nutritional benefits and protection against pathogen invasion of the surrounding endosperm. The chain is Ribosome-inactivating protein 3 (CRIP3) from Zea mays (Maize).